The primary structure comprises 210 residues: Scoloptoxin SSD558 (210 aa).

The N-terminal stretch at 1–23 (MNILLPSTLFVLLMFQIIGSGMG) is a signal peptide.

Post-translationally, contains 3 disulfide bonds. In terms of tissue distribution, expressed by the venom gland.

Its subcellular location is the secreted. The chain is Scoloptoxin SSD558 from Scolopendra dehaani (Thai centipede).